A 235-amino-acid chain; its full sequence is Claudin-16 (235 aa).

Residues 1-3 (MKD) lie on the Cytoplasmic side of the membrane. The helical transmembrane segment at 4–24 (LLQYAACFLAIFSTGFLIVAT) threads the bilayer. Residues 25 to 79 (RTDCWMVNADDSLEVSTKCRGLWWECVTNAFDGIRTCDEYDSIYAEHPLKLVVTR) lie on the Extracellular side of the membrane. The chain crosses the membrane as a helical span at residues 80–100 (ALMITADILAGFGFITLLLGL). Topologically, residues 101–115 (DCVKFLPDEPHIKVR) are cytoplasmic. A helical membrane pass occupies residues 116–136 (LCFVAGTVLLIAGTPGIIGSV). Over 137–169 (WYAVDVYVERSSLVLHNIFLGIQYKFGWSCWLG) the chain is Extracellular. Residues 170-190 (MAGSLGCFLAGALLTCCLYLF) traverse the membrane as a helical segment. At 191–235 (KDVGPERNYPYAMRKPYSTAGVSMAKSYKAPRTETAKMYAVDTRV) the chain is on the cytoplasmic side. The short motif at 233–235 (TRV) is the Interaction with TJP1 element.

This sequence belongs to the claudin family. As to quaternary structure, can form heteropolymeric tight junction strands with other claudins. Interacts with CLDN19. Interacts (via PDZ-binding motif TRV) with TJP1 (via PDZ domain). Cannot form tight junction strands on its own.

It is found in the cell junction. The protein resides in the tight junction. It localises to the cell membrane. The catalysed reaction is Mg(2+)(in) = Mg(2+)(out). It catalyses the reaction Ca(2+)(in) = Ca(2+)(out). The enzyme catalyses Na(+)(in) = Na(+)(out). It carries out the reaction K(+)(in) = K(+)(out). The catalysed reaction is Rb(+)(in) = Rb(+)(out). It catalyses the reaction Cs(+)(in) = Cs(+)(out). The enzyme catalyses Li(+)(in) = Li(+)(out). Functionally, forms paracellular channels: coassembles with CLDN19 into tight junction strands with cation-selective channels through the strands, conveying epithelial permeability in a process known as paracellular tight junction permeability. Involved in the maintenance of ion gradients along the nephron. In the thick ascending limb (TAL) of Henle's loop, facilitates sodium paracellular permeability from the interstitial compartment to the lumen, contributing to the lumen-positive transepithelial potential that drives paracellular magnesium and calcium reabsorption. The chain is Claudin-16 from Rattus norvegicus (Rat).